A 461-amino-acid chain; its full sequence is Cysteine--tRNA ligase (461 aa).

Residue Cys30 participates in Zn(2+) binding. Positions 32 to 42 match the 'HIGH' region motif; that stretch reads VTVYDLCHIGH. Positions 211, 236, and 240 each coordinate Zn(2+). The 'KMSKS' region signature appears at 268–272; it reads KMSKS. An ATP-binding site is contributed by Lys271.

Belongs to the class-I aminoacyl-tRNA synthetase family. Monomer. It depends on Zn(2+) as a cofactor.

It localises to the cytoplasm. It catalyses the reaction tRNA(Cys) + L-cysteine + ATP = L-cysteinyl-tRNA(Cys) + AMP + diphosphate. The protein is Cysteine--tRNA ligase of Shewanella sp. (strain MR-7).